A 143-amino-acid polypeptide reads, in one-letter code: Transcription antitermination protein NusB (143 aa).

The protein belongs to the NusB family.

In terms of biological role, involved in transcription antitermination. Required for transcription of ribosomal RNA (rRNA) genes. Binds specifically to the boxA antiterminator sequence of the ribosomal RNA (rrn) operons. In Clostridium botulinum (strain ATCC 19397 / Type A), this protein is Transcription antitermination protein NusB.